Consider the following 288-residue polypeptide: UDP-3-O-acyl-N-acetylglucosamine deacetylase (288 aa).

Zn(2+)-binding residues include His-79, His-236, and Asp-240. The Proton donor role is filled by His-263.

The protein belongs to the LpxC family. The cofactor is Zn(2+).

The catalysed reaction is a UDP-3-O-[(3R)-3-hydroxyacyl]-N-acetyl-alpha-D-glucosamine + H2O = a UDP-3-O-[(3R)-3-hydroxyacyl]-alpha-D-glucosamine + acetate. It participates in glycolipid biosynthesis; lipid IV(A) biosynthesis; lipid IV(A) from (3R)-3-hydroxytetradecanoyl-[acyl-carrier-protein] and UDP-N-acetyl-alpha-D-glucosamine: step 2/6. Catalyzes the hydrolysis of UDP-3-O-myristoyl-N-acetylglucosamine to form UDP-3-O-myristoylglucosamine and acetate, the committed step in lipid A biosynthesis. This Rickettsia africae (strain ESF-5) protein is UDP-3-O-acyl-N-acetylglucosamine deacetylase.